Here is a 220-residue protein sequence, read N- to C-terminus: Guanylate kinase (220 aa).

In terms of domain architecture, Guanylate kinase-like spans 3–180 (GRLFVMTGAS…AVADFLAILT (178 aa)). 10 to 17 (GASGVGKG) contacts ATP.

This sequence belongs to the guanylate kinase family.

Its subcellular location is the cytoplasm. It carries out the reaction GMP + ATP = GDP + ADP. Its function is as follows. Essential for recycling GMP and indirectly, cGMP. The chain is Guanylate kinase from Thermus thermophilus (strain ATCC BAA-163 / DSM 7039 / HB27).